The primary structure comprises 91 residues: Acylphosphatase (91 aa).

The 88-residue stretch at 4-91 (RYLIKVLGRV…DNEKSFKIVY (88 aa)) folds into the Acylphosphatase-like domain. Residues R19 and N37 contribute to the active site.

Belongs to the acylphosphatase family.

The enzyme catalyses an acyl phosphate + H2O = a carboxylate + phosphate + H(+). The sequence is that of Acylphosphatase (acyP) from Clostridium acetobutylicum (strain ATCC 824 / DSM 792 / JCM 1419 / IAM 19013 / LMG 5710 / NBRC 13948 / NRRL B-527 / VKM B-1787 / 2291 / W).